The sequence spans 698 residues: Elongation factor G 1 (698 aa).

Residues E8 to T290 form the tr-type G domain. Residues A17 to T24, D88 to H92, and N142 to D145 each bind GTP.

Belongs to the TRAFAC class translation factor GTPase superfamily. Classic translation factor GTPase family. EF-G/EF-2 subfamily.

It is found in the cytoplasm. Its function is as follows. Catalyzes the GTP-dependent ribosomal translocation step during translation elongation. During this step, the ribosome changes from the pre-translocational (PRE) to the post-translocational (POST) state as the newly formed A-site-bound peptidyl-tRNA and P-site-bound deacylated tRNA move to the P and E sites, respectively. Catalyzes the coordinated movement of the two tRNA molecules, the mRNA and conformational changes in the ribosome. In Vibrio cholerae serotype O1 (strain ATCC 39315 / El Tor Inaba N16961), this protein is Elongation factor G 1.